The primary structure comprises 550 residues: Spermatogenesis-associated protein 2 (550 aa).

Positions 83-156 (TVGTAFATLE…YNVRDHPGGA (74 aa)) constitute a PUB domain. The PIM motif motif lies at 320–337 (YHLSSLDEVDLYTERGLG). Residues 457–480 (SKPVGSGPSPVGSLVSSGSSSSGG) are disordered.

Belongs to the SPATA2 family.

The protein localises to the cytoplasm. The protein resides in the nucleus. Bridging factor that mediates the recruitment of cyld to the LUBAC complex, thereby regulating TNF-alpha-induced necroptosis. Required to activate the 'Met-1'- (linear) and 'Lys-63'-linked deubiquitinase activities of cyld. The polypeptide is Spermatogenesis-associated protein 2 (Danio rerio (Zebrafish)).